The following is a 446-amino-acid chain: Xylose isomerase 1 (446 aa).

Active-site residues include H109 and D112. Residues E240, E276, H279, D304, D315, D317, and D347 each coordinate Mg(2+).

The protein belongs to the xylose isomerase family. As to quaternary structure, homotetramer. Requires Mg(2+) as cofactor.

The protein resides in the cytoplasm. It catalyses the reaction alpha-D-xylose = alpha-D-xylulofuranose. The sequence is that of Xylose isomerase 1 from Xanthomonas campestris pv. campestris (strain 8004).